A 150-amino-acid polypeptide reads, in one-letter code: D-aminoacyl-tRNA deacylase (150 aa).

The Gly-cisPro motif, important for rejection of L-amino acids motif lies at 138 to 139 (GP).

This sequence belongs to the DTD family. In terms of assembly, homodimer.

It is found in the cytoplasm. The catalysed reaction is glycyl-tRNA(Ala) + H2O = tRNA(Ala) + glycine + H(+). It carries out the reaction a D-aminoacyl-tRNA + H2O = a tRNA + a D-alpha-amino acid + H(+). In terms of biological role, an aminoacyl-tRNA editing enzyme that deacylates mischarged D-aminoacyl-tRNAs. Also deacylates mischarged glycyl-tRNA(Ala), protecting cells against glycine mischarging by AlaRS. Acts via tRNA-based rather than protein-based catalysis; rejects L-amino acids rather than detecting D-amino acids in the active site. By recycling D-aminoacyl-tRNA to D-amino acids and free tRNA molecules, this enzyme counteracts the toxicity associated with the formation of D-aminoacyl-tRNA entities in vivo and helps enforce protein L-homochirality. The protein is D-aminoacyl-tRNA deacylase of Bacteroides thetaiotaomicron (strain ATCC 29148 / DSM 2079 / JCM 5827 / CCUG 10774 / NCTC 10582 / VPI-5482 / E50).